A 673-amino-acid chain; its full sequence is MSKPFKLNSAFKPSGDQPEAIRRLEEGLEDGLAHQTLLGVTGSGKTFTIANVIADLQRPTMVLAPNKTLAAQLYGEMKEFFPENAVEYFVSYYDYYQPEAYVPSSDTFIEKDASVNEHIEQMRLSATKAMLERRDVVVVASVSAIYGLGDPDLYLKMMLHLTVGMIIDQRAILRRLAELQYARNDQAFQRGTFRVRGEVIDIFPAESDDIALRVXLFDEEVERLSLFDPLTGQIVSTIPRFTIYPKTHYVTPRERIVQAMEEIKEELAARRKVLLENNKLMEEQRLTQRTQFDLEMMNELGYCSGIENYSRFLSGRGPGEPPPTLFDYLPADGLLVVDESHVTIPQIGGMYRGDRARKETLVEYGFRLPSALDNRPLKFEEFEALAPQTIYVSATPGNYELEKSGGDVVDQVVRPTGLLDPIIEVRPVATQVDDLLSEIRQRAAINERVLVTTLTKRMAEDLTEYLEEHGERVRYLHSDIDTVERMEIIRDLRLGEFDVLVGINLLREGLDMPEVSLVAILDADKEGFLRSERSLIQTIGRAARNVNGKAILYGDKITPSMAKAIGETERRREKQQKYNEEHGITPQGLNKKVVDILALGQNIAKTKAKGRGKSRPIVEPDNVPMDMSPKALQQKIHELEGLMMQHAQNLEFEEAAQIRDQLHQLRELFIAAS.

The Helicase ATP-binding domain occupies 26–415 (EGLEDGLAHQ…GDVVDQVVRP (390 aa)). 39 to 46 (GVTGSGKT) lines the ATP pocket. Residues 92 to 115 (YYDYYQPEAYVPSSDTFIEKDASV) carry the Beta-hairpin motif. Residues 431–597 (QVDDLLSEIR…GLNKKVVDIL (167 aa)) enclose the Helicase C-terminal domain. Residues 608-627 (AKGRGKSRPIVEPDNVPMDM) form a disordered region. The 36-residue stretch at 633–668 (QQKIHELEGLMMQHAQNLEFEEAAQIRDQLHQLREL) folds into the UVR domain.

Belongs to the UvrB family. Forms a heterotetramer with UvrA during the search for lesions. Interacts with UvrC in an incision complex.

Its subcellular location is the cytoplasm. In terms of biological role, the UvrABC repair system catalyzes the recognition and processing of DNA lesions. A damage recognition complex composed of 2 UvrA and 2 UvrB subunits scans DNA for abnormalities. Upon binding of the UvrA(2)B(2) complex to a putative damaged site, the DNA wraps around one UvrB monomer. DNA wrap is dependent on ATP binding by UvrB and probably causes local melting of the DNA helix, facilitating insertion of UvrB beta-hairpin between the DNA strands. Then UvrB probes one DNA strand for the presence of a lesion. If a lesion is found the UvrA subunits dissociate and the UvrB-DNA preincision complex is formed. This complex is subsequently bound by UvrC and the second UvrB is released. If no lesion is found, the DNA wraps around the other UvrB subunit that will check the other stand for damage. This is UvrABC system protein B from Escherichia coli O6:H1 (strain CFT073 / ATCC 700928 / UPEC).